A 164-amino-acid chain; its full sequence is MTGAVCPGSFDPVTNGHLDVIGRAAAQFDEVIVTVMVNKNKRGLFTVEERIEMLEDSTADLPNVRVSSWHGLLVDYAKQQGITAIVKGLRGANDFDYELQMAQMNQKLSGVDTLFIPTNPTYSYLSSSLVKEVATFGGDVSDMLPEKVHARLLTRIAERAAESS.

Residue S9 participates in substrate binding. ATP-binding positions include 9 to 10 (SF) and H17. Substrate contacts are provided by K41, L73, and K87. Residues 88–90 (GLR), E98, and 122–128 (YSYLSSS) contribute to the ATP site.

Belongs to the bacterial CoaD family. In terms of assembly, homohexamer. Mg(2+) serves as cofactor.

It localises to the cytoplasm. It catalyses the reaction (R)-4'-phosphopantetheine + ATP + H(+) = 3'-dephospho-CoA + diphosphate. The protein operates within cofactor biosynthesis; coenzyme A biosynthesis; CoA from (R)-pantothenate: step 4/5. Its function is as follows. Reversibly transfers an adenylyl group from ATP to 4'-phosphopantetheine, yielding dephospho-CoA (dPCoA) and pyrophosphate. The sequence is that of Phosphopantetheine adenylyltransferase from Rhodococcus opacus (strain B4).